Reading from the N-terminus, the 205-residue chain is Anaerobic dimethyl sulfoxide reductase chain B (205 aa).

3 consecutive 4Fe-4S ferredoxin-type domains span residues 4 to 32 (YGFYFDSERCTGCKTCELACKDYKDLGTE), 57 to 89 (NIFAYYMSISCNHCADPACTKVCPTGAMHKNAD), and 90 to 119 (GFVIVNEEICIGCRYCHMACPYDAPQYDAQ). Residues Cys-13, Cys-16, Cys-19, Cys-23, Cys-67, Cys-70, Cys-75, Cys-79, Cys-99, Cys-102, Cys-105, Cys-109, Cys-126, Cys-129, Cys-141, and Cys-145 each coordinate [4Fe-4S] cluster.

In terms of assembly, heterotrimeric enzyme composed of a catalytic heterodimer (DmsAB) and a membrane anchor protein (DmsC). [4Fe-4S] cluster is required as a cofactor.

Functionally, electron transfer subunit of the terminal reductase during anaerobic growth on various sulfoxide and N-oxide compounds. This Haemophilus influenzae (strain ATCC 51907 / DSM 11121 / KW20 / Rd) protein is Anaerobic dimethyl sulfoxide reductase chain B (dmsB).